Reading from the N-terminus, the 385-residue chain is uncharacterized protein (385 aa).

Belongs to the peptidase M20 family.

This is an uncharacterized protein from Staphylococcus saprophyticus subsp. saprophyticus (strain ATCC 15305 / DSM 20229 / NCIMB 8711 / NCTC 7292 / S-41).